Reading from the N-terminus, the 370-residue chain is sn-glycerol-3-phosphate import ATP-binding protein UgpC (370 aa).

Residues 4-236 (LSLKNIAKRY…PATAFVAAFM (233 aa)) form the ABC transporter domain. 38-45 (GPSGCGKS) is a binding site for ATP.

Belongs to the ABC transporter superfamily. sn-glycerol-3-phosphate importer (TC 3.A.1.1.3) family. In terms of assembly, the complex is composed of two ATP-binding proteins (UgpC), two transmembrane proteins (UgpA and UgpE) and a solute-binding protein (UgpB).

It is found in the cell inner membrane. The catalysed reaction is sn-glycerol 3-phosphate(out) + ATP + H2O = sn-glycerol 3-phosphate(in) + ADP + phosphate + H(+). In terms of biological role, part of the ABC transporter complex UgpBAEC involved in sn-glycerol-3-phosphate (G3P) import. Responsible for energy coupling to the transport system. The protein is sn-glycerol-3-phosphate import ATP-binding protein UgpC of Chromobacterium violaceum (strain ATCC 12472 / DSM 30191 / JCM 1249 / CCUG 213 / NBRC 12614 / NCIMB 9131 / NCTC 9757 / MK).